We begin with the raw amino-acid sequence, 677 residues long: Nucleolar protein 9 (677 aa).

The segment covering 1–12 has biased composition (basic residues); that stretch reads MAKPRGRKLLKK. Positions 1–50 are disordered; sequence MAKPRGRKLLKKQQKDQFEPSNDVEKFEDDRDHQENVYQGDAADSEKSSD. Over residues 13–35 the composition is skewed to basic and acidic residues; it reads QQKDQFEPSNDVEKFEDDRDHQE. Pumilio repeat units follow at residues 94 to 129, 130 to 165, 193 to 228, 287 to 331, 339 to 374, 375 to 412, 516 to 553, and 554 to 592; these read EAKG…SVFK, AFNG…ELLT, ELKP…SSTK, DISP…LVFN, KEEA…RLYH, LYMK…QILD, NLPE…RLLL, and NVLS…RIAQ. The segment at 639-677 is disordered; the sequence is PNAVKPQPKNQQFKNNGNDNKRSSDSNYSSSSNFKKQRR. A compositionally biased stretch (polar residues) spans 646–655; the sequence is PKNQQFKNNG.

The protein belongs to the NOP9 family.

Its subcellular location is the nucleus. The protein resides in the nucleolus. Its function is as follows. RNA-binding nucleolar protein required for pre-rRNA processing. Involved in production of 18S rRNA and assembly of small ribosomal subunit. The polypeptide is Nucleolar protein 9 (NOP9) (Vanderwaltozyma polyspora (strain ATCC 22028 / DSM 70294 / BCRC 21397 / CBS 2163 / NBRC 10782 / NRRL Y-8283 / UCD 57-17) (Kluyveromyces polysporus)).